We begin with the raw amino-acid sequence, 350 residues long: Cobalt-precorrin-5B C(1)-methyltransferase (350 aa).

The protein belongs to the CbiD family.

The enzyme catalyses Co-precorrin-5B + S-adenosyl-L-methionine = Co-precorrin-6A + S-adenosyl-L-homocysteine. The protein operates within cofactor biosynthesis; adenosylcobalamin biosynthesis; cob(II)yrinate a,c-diamide from sirohydrochlorin (anaerobic route): step 6/10. Its function is as follows. Catalyzes the methylation of C-1 in cobalt-precorrin-5B to form cobalt-precorrin-6A. This Syntrophotalea carbinolica (strain DSM 2380 / NBRC 103641 / GraBd1) (Pelobacter carbinolicus) protein is Cobalt-precorrin-5B C(1)-methyltransferase.